The chain runs to 1130 residues: Sterol regulatory element-binding protein 2 (1130 aa).

The interval 1–50 (MDESSELGVLETMETLTELGDELTLGDIDEMLQFVSNQVGEFPDLFSEQL) is transcriptional activation (acidic). At 1–470 (MDESSELGVL…VALGMVDRSR (470 aa)) the chain is on the cytoplasmic side. Residues 53–133 (SFPGGGSNGG…PQPQPQPPAQ (81 aa)) form a disordered region. Positions 55-64 (PGGGSNGGSG) are enriched in gly residues. Positions 83–93 (RSFSQVPLSTF) are enriched in polar residues. Low complexity predominate over residues 94–104 (SPSAASPQAPA). The span at 111 to 131 (PTPPRATPVLQPRPQPQPQPP) shows a compositional bias: pro residues. Residues 226–480 (QQVPVLVQPQ…ILLCVLTFLG (255 aa)) are interaction with LMNA. Residues 319–369 (ERRTTHNIIEKRYRSSINDKIIELKDLVMGTDAKMHKSGVLRKAIDYIKYL) enclose the bHLH domain. The interval 369–390 (LQQVNHKLRQENMVLKLANQKN) is leucine-zipper. Residue lysine 453 forms a Glycyl lysine isopeptide (Lys-Gly) (interchain with G-Cter in SUMO2) linkage. Residues 471–491 (ILLCVLTFLGLSFNPLTSLLQ) form a helical membrane-spanning segment. Residues 492-522 (WGGAHNTDQHPYSGSGRSVLSLESGAGGWFD) are Lumenal-facing. A helical membrane pass occupies residues 523–543 (WMVPTLLLWLVNGVIVLSVFV). Residues 544-1130 (KLLVHGEPVI…LGGGTAIAAS (587 aa)) are Cytoplasmic-facing. Serine 1087 carries the post-translational modification Phosphoserine.

Belongs to the SREBP family. In terms of assembly, forms a tight complex with SCAP, the SCAP-SREBP complex, in the endoplasmic reticulum membrane and the Golgi apparatus. Interacts with PAQR3; the interaction anchors the SCAP-SREBP complex to the Golgi apparatus in low cholesterol conditions. Interacts (via C-terminal domain) with RNF139. Homodimer; efficient DNA binding of the soluble transcription factor fragment requires dimerization with another bHLH protein. Interacts with LMNA. Post-translationally, processed in the Golgi apparatus, releasing the protein from the membrane. At low cholesterol the SCAP-SREBP complex is recruited into COPII vesicles for export from the endoplasmic reticulum. In the Golgi, complex SREBPs are cleaved sequentially by site-1 (MBTPS1, S1P) and site-2 (MBTPS2, S2P) proteases. The first cleavage by site-1 protease occurs within the luminal loop, the second cleavage by site-2 protease occurs within the first transmembrane domain, releasing the transcription factor from the Golgi membrane. Apoptosis triggers cleavage by the cysteine proteases caspase-3 and caspase-7. Cleavage and activation is induced by mediated cholesterol efflux. Phosphorylated by AMPK, leading to suppress protein processing and nuclear translocation, and repress target gene expression. In terms of processing, SCAP-free SREBF2 is ubiquitinated by the BCR(ARMC5) complex, leading to its degradation. Post-translationally, ubiquitinated; the nuclear form has a rapid turnover and is rapidly ubiquitinated and degraded by the proteasome in the nucleus.

The protein localises to the endoplasmic reticulum membrane. Its subcellular location is the golgi apparatus membrane. It is found in the cytoplasmic vesicle. It localises to the COPII-coated vesicle membrane. The protein resides in the nucleus. Activation by cleavage is down-regulated upon activation of SIRT3-dependent PRKAA1/AMPK-alpha signaling cascade which leads to inhibition of ATP-consuming lipogenesis to restore cellular energy balance. Its function is as follows. Precursor of the transcription factor form (Processed sterol regulatory element-binding protein 2), which is embedded in the endoplasmic reticulum membrane. Low sterol concentrations promote processing of this form, releasing the transcription factor form that translocates into the nucleus and activates transcription of genes involved in cholesterol biosynthesis. Functionally, key transcription factor that regulates expression of genes involved in cholesterol biosynthesis. Binds to the sterol regulatory element 1 (SRE-1) (5'-ATCACCCCAC-3'). Has dual sequence specificity binding to both an E-box motif (5'-ATCACGTGA-3') and to SRE-1 (5'-ATCACCCCAC-3'). Regulates transcription of genes related to cholesterol synthesis pathway. This is Sterol regulatory element-binding protein 2 from Mus musculus (Mouse).